The primary structure comprises 469 residues: Glutamate--tRNA ligase (469 aa).

The 'HIGH' region motif lies at 9–19 (PSPTGFLHVGG). A 'KMSKS' region motif is present at residues 236–240 (KLSKR). Residue lysine 239 coordinates ATP.

The protein belongs to the class-I aminoacyl-tRNA synthetase family. Glutamate--tRNA ligase type 1 subfamily. As to quaternary structure, monomer.

The protein localises to the cytoplasm. It carries out the reaction tRNA(Glu) + L-glutamate + ATP = L-glutamyl-tRNA(Glu) + AMP + diphosphate. Catalyzes the attachment of glutamate to tRNA(Glu) in a two-step reaction: glutamate is first activated by ATP to form Glu-AMP and then transferred to the acceptor end of tRNA(Glu). This Shewanella frigidimarina (strain NCIMB 400) protein is Glutamate--tRNA ligase.